Here is a 314-residue protein sequence, read N- to C-terminus: Large ribosomal subunit protein uL10 (314 aa).

The interval Gly281–Gln314 is disordered. The segment covering Pro287–Asp302 has biased composition (basic and acidic residues).

It belongs to the universal ribosomal protein uL10 family. Part of the 50S ribosomal subunit. Forms part of the ribosomal stalk which helps the ribosome interact with GTP-bound translation factors. Forms a heptameric L10(L12)2(L12)2(L12)2 complex, where L10 forms an elongated spine to which the L12 dimers bind in a sequential fashion.

In terms of biological role, forms part of the ribosomal stalk, playing a central role in the interaction of the ribosome with GTP-bound translation factors. The polypeptide is Large ribosomal subunit protein uL10 (Thermoplasma acidophilum (strain ATCC 25905 / DSM 1728 / JCM 9062 / NBRC 15155 / AMRC-C165)).